The sequence spans 387 residues: Patatin group D-3 (387 aa).

The first 23 residues, 1–23 (MATTKSFLILIVMILATTSSTFA), serve as a signal peptide directing secretion. In terms of domain architecture, PNPLA spans 32–230 (LSIDGGGIKG…TVADPALLSI (199 aa)). A GXGXXG motif is present at residues 36 to 41 (GGGIKG). Residues 75 to 79 (GTSTG) carry the GXSXG motif. Residue serine 77 is the Nucleophile of the active site. Residue asparagine 115 is glycosylated (N-linked (GlcNAc...) asparagine). The active-site Proton acceptor is aspartate 216. The DGA/G motif lies at 216-218 (DGA). Positions 361-385 (ETYEEALKRFAKLLSDRKKLRANKA) form a coiled coil.

It belongs to the patatin family. In terms of tissue distribution, tuber.

The protein localises to the vacuole. Probable lipolytic acyl hydrolase (LAH), an activity which is thought to be involved in the response of tubers to pathogens. The protein is Patatin group D-3 of Solanum tuberosum (Potato).